The following is a 105-amino-acid chain: Large ribosomal subunit protein uL23 (105 aa).

The protein belongs to the universal ribosomal protein uL23 family. Part of the 50S ribosomal subunit. Contacts protein L29, and trigger factor when it is bound to the ribosome.

Functionally, one of the early assembly proteins it binds 23S rRNA. One of the proteins that surrounds the polypeptide exit tunnel on the outside of the ribosome. Forms the main docking site for trigger factor binding to the ribosome. The sequence is that of Large ribosomal subunit protein uL23 from Ureaplasma urealyticum serovar 10 (strain ATCC 33699 / Western).